A 147-amino-acid chain; its full sequence is Large ribosomal subunit protein bL9 (147 aa).

The protein belongs to the bacterial ribosomal protein bL9 family.

Binds to the 23S rRNA. The polypeptide is Large ribosomal subunit protein bL9 (Myxococcus xanthus (strain DK1622)).